The sequence spans 162 residues: Ribosome maturation factor RimM (162 aa).

Residues 86–160 form the PRC barrel domain; it reads EGRYYYFALI…GIHVDPIPGL (75 aa).

The protein belongs to the RimM family. As to quaternary structure, binds ribosomal protein uS19.

Its subcellular location is the cytoplasm. Functionally, an accessory protein needed during the final step in the assembly of 30S ribosomal subunit, possibly for assembly of the head region. Essential for efficient processing of 16S rRNA. May be needed both before and after RbfA during the maturation of 16S rRNA. It has affinity for free ribosomal 30S subunits but not for 70S ribosomes. The sequence is that of Ribosome maturation factor RimM from Thermus thermophilus (strain ATCC BAA-163 / DSM 7039 / HB27).